A 61-amino-acid chain; its full sequence is Large ribosomal subunit protein eL37 (61 aa).

4 residues coordinate Zn(2+): C19, C22, C34, and C37. The C4-type zinc finger occupies 19-37; that stretch reads CRRCGRNSFNVRKGYCAAC.

It belongs to the eukaryotic ribosomal protein eL37 family. Requires Zn(2+) as cofactor.

Functionally, binds to the 23S rRNA. This Sulfurisphaera tokodaii (strain DSM 16993 / JCM 10545 / NBRC 100140 / 7) (Sulfolobus tokodaii) protein is Large ribosomal subunit protein eL37 (rpl37e).